A 605-amino-acid polypeptide reads, in one-letter code: Podocalyxin-like protein 2 (605 aa).

Positions 1 to 32 (MGRLLRAARLPPLLSPLLLLLVGGAFLGACVA) are cleaved as a signal peptide. Topologically, residues 33 to 500 (GSDEPGPEGL…ASQVRSDYGT (468 aa)) are extracellular. Ser79 carries an O-linked (Xyl...) (chondroitin sulfate) serine glycan. Tyr97 and Tyr118 each carry sulfotyrosine. The O-glycosylated at one site stretch occupies residues 129–134 (SIEDTS). Positions 129–347 (SIEDTSQAQE…PGDMELTPSS (219 aa)) are disordered. The O-linked (GalNAc...) serine glycan is linked to Ser144. A compositionally biased stretch (acidic residues) spans 162–189 (EEEEEEEEEEEREKEEVEKQEEEEEEEL). Residue Asn193 is glycosylated (N-linked (GlcNAc...) asparagine). The segment covering 207–217 (SLTSSSQTPGA) has biased composition (polar residues). Composition is skewed to low complexity over residues 241–255 (PSLL…TVTP) and 288–298 (EATAGAAGLSG). N-linked (GlcNAc...) asparagine glycosylation occurs at Asn395. Residues 501–521 (LFVVLVVIGAICIIIIALGLL) form a helical membrane-spanning segment. At 522–605 (YNCWQRRLPK…SDVFEEDTHL (84 aa)) the chain is on the cytoplasmic side. The tract at residues 554–605 (LDVASDSQSEMQEKHPSLNGGGALNGPGSWGALMGGKRDPEDSDVFEEDTHL) is disordered. Ser570 carries the post-translational modification Phosphoserine. Residues 572–582 (NGGGALNGPGS) show a composition bias toward gly residues. The segment covering 594-605 (EDSDVFEEDTHL) has biased composition (acidic residues). Ser596 is subject to Phosphoserine.

This sequence belongs to the podocalyxin family. Homodimer; disulfide-linked. Interacts with SELL, SELE and SELP. In terms of processing, O-glycosylated; contains chondroitin sulfate. Displays sialylated O-linked oligosaccharides. Sulfation is necessary for interaction with SELL. Sialylated O-linked oligosaccharides are necessary for interaction with SELL, SELE and SELP. Expressed in T-cells, B-cells and monocytes. Expression is higher on memory and germinal center cells than on naive B-cells (at protein level). Highly expressed in brain. Moderately expressed in pancreas, kidney and lymphoid node. Weakly expressed in liver. Detected in both endothelial cells and CD34+ bone marrow cells.

The protein resides in the membrane. Functionally, acts as a ligand for vascular selectins. Mediates rapid rolling of leukocytes over vascular surfaces through high affinity divalent cation-dependent interactions with E-, P- and L-selectins. The polypeptide is Podocalyxin-like protein 2 (PODXL2) (Homo sapiens (Human)).